Here is a 417-residue protein sequence, read N- to C-terminus: MVSSQPVPIDDGGKRRKKKRRTRAMESFTGKFADLYRLTDELLGEGAYAKVQGCVSLQNGKDYAVKIVEKKAGHSRSRVFREVETLYQCQGNKNILELIEFCEDDARFYLVFEKLRGGSILSHIQKRKHFNEREASKVVKDIASALDFLHTKGIAHRDLKPENILCEFKDKVSPVKICDFDLGSGVKLNSACTPITTPELTTPCGSAEYMAPEVVEVFTEEATFYDKRCDLWSLGVILYIMLSGYPPFVGNCGADCGWDRGEMCRVCQNKLFESIQEGKYEFPEKDWSHISNSAKDLISKLLVRDAKERLSAAQVLQHPWLQGDAPERGLPTPLVLQRNSSTKDLTIFAAEAVALNRQLSQHDSDLNEEHESFIHTVCSMRLSPPSKSRLAKRRAQAHARKGGSHLTHTTVTSQGAT.

The tract at residues M1–R20 is disordered. Residues R37–L321 enclose the Protein kinase domain. Residues L43–V51 and K66 each bind ATP. The active-site Proton acceptor is the D158. A disordered region spans residues A397–T417. Over residues L406–T417 the composition is skewed to polar residues.

It belongs to the protein kinase superfamily. CAMK Ser/Thr protein kinase family. Mg(2+) serves as cofactor.

It catalyses the reaction L-seryl-[protein] + ATP = O-phospho-L-seryl-[protein] + ADP + H(+). The catalysed reaction is L-threonyl-[protein] + ATP = O-phospho-L-threonyl-[protein] + ADP + H(+). May play a role in the response to environmental stress and cytokines. Appears to regulate translation by phosphorylating EIF4E, thus increasing the affinity of this protein for the 7-methylguanosine-containing mRNA cap. The polypeptide is MAP kinase-interacting serine/threonine-protein kinase 1 (mknk1) (Xenopus tropicalis (Western clawed frog)).